A 336-amino-acid chain; its full sequence is Phospho-N-acetylmuramoyl-pentapeptide-transferase (336 aa).

Helical transmembrane passes span 3 to 23, 53 to 73, 78 to 98, 118 to 138, 143 to 163, 174 to 194, 200 to 220, 226 to 246, 251 to 271, and 316 to 336; these read LTLI…PYFI, GGTV…LFSI, SLAL…IGFL, LALQ…PSGI, VFGY…FWVV, GIDG…GVIA, FDVL…FCFN, VFMG…ISIA, WTLL…MLQV, and AFLW…LYVF.

The protein belongs to the glycosyltransferase 4 family. MraY subfamily. Mg(2+) is required as a cofactor.

Its subcellular location is the cell membrane. The enzyme catalyses UDP-N-acetyl-alpha-D-muramoyl-L-alanyl-gamma-D-glutamyl-L-lysyl-D-alanyl-D-alanine + di-trans,octa-cis-undecaprenyl phosphate = Mur2Ac(oyl-L-Ala-gamma-D-Glu-L-Lys-D-Ala-D-Ala)-di-trans,octa-cis-undecaprenyl diphosphate + UMP. It participates in cell wall biogenesis; peptidoglycan biosynthesis. In terms of biological role, catalyzes the initial step of the lipid cycle reactions in the biosynthesis of the cell wall peptidoglycan: transfers peptidoglycan precursor phospho-MurNAc-pentapeptide from UDP-MurNAc-pentapeptide onto the lipid carrier undecaprenyl phosphate, yielding undecaprenyl-pyrophosphoryl-MurNAc-pentapeptide, known as lipid I. This chain is Phospho-N-acetylmuramoyl-pentapeptide-transferase, found in Streptococcus pyogenes serotype M49 (strain NZ131).